We begin with the raw amino-acid sequence, 589 residues long: ATP-dependent ubiquitin transferase-like protein Cap2 (589 aa).

Cysteine 13 is covalently cross-linked (Glycyl cysteine dithioester (Cys-Gly) (interchain with G-Cter in DncV)). Lysine 77 participates in a covalent cross-link: Glycyl lysine isopeptide (Lys-Gly) (interchain with G-Cter in DncV). Catalysis depends on cysteine 91, which acts as the For E2-like domain. Glycyl lysine isopeptide (Lys-Gly) (interchain with G-Cter in DncV) cross-links involve residues lysine 305, lysine 387, and lysine 484. Cysteine 493 participates in a covalent cross-link: Glycyl cysteine dithioester (Cys-Gly) (interchain with G-Cter in DncV). Active-site for E1-like domain residues include cysteine 493, cysteine 496, and cysteine 513. Cysteine 513 participates in a covalent cross-link: Glycyl cysteine dithioester (Cys-Gly) (interchain with G-Cter in DncV). Lysine 523 is covalently cross-linked (Glycyl lysine isopeptide (Lys-Gly) (interchain with G-Cter in DncV)).

This sequence in the C-terminal section; belongs to the HesA/MoeB/ThiF family. As to quaternary structure, a Cap2 dimer is bound on either side by a DncV monomer. In terms of processing, conjugated to DncV via 5 different Lys residues and 3 Cys residues.

Its function is as follows. CD-NTase priming component of a CBASS antiviral system. CBASS (cyclic oligonucleotide-based antiphage signaling system) provides immunity against bacteriophages. The CD-NTase protein (DncV) synthesizes cyclic nucleotides in response to infection; these serve as specific second messenger signals. The signals activate a diverse range of effectors, leading to bacterial cell death and thus abortive phage infection. A type II-A(GA) CBASS system. Functionally, conjugates DncV to itself in vitro and to other cellular proteins in vivo; conjugation requires ATP. This primes DncV, upon phage infection CdnA activates and makes cyclic nucleotides. Protects E.coli against phage infection. When capV and dncV are introduced in E.coli MG1655 there is 1000-fold protection against phage P1; protection against other phage (T2, T4, T5, T6 and lambda-vir) requires the 2 subsequent genes. In another paper the capV-dncV-cap2-cap3 operon gives 10(4)-10(5)-fold protection against phages lambda, T2, T4 and T6, about 1000-fold protection against P1 and 10-fold protection against T5. The chain is ATP-dependent ubiquitin transferase-like protein Cap2 from Escherichia coli (strain TW11681).